The chain runs to 180 residues: GTP cyclohydrolase 1 (180 aa).

Residues cysteine 71, histidine 74, and cysteine 142 each coordinate Zn(2+).

It belongs to the GTP cyclohydrolase I family. As to quaternary structure, toroid-shaped homodecamer, composed of two pentamers of five dimers.

The enzyme catalyses GTP + H2O = 7,8-dihydroneopterin 3'-triphosphate + formate + H(+). The protein operates within cofactor biosynthesis; 7,8-dihydroneopterin triphosphate biosynthesis; 7,8-dihydroneopterin triphosphate from GTP: step 1/1. This chain is GTP cyclohydrolase 1 (folE), found in Helicobacter pylori (strain ATCC 700392 / 26695) (Campylobacter pylori).